We begin with the raw amino-acid sequence, 231 residues long: Proteasome subunit alpha type-2 (231 aa).

Belongs to the peptidase T1A family. The 26S proteasome consists of a 20S proteasome core and two 19S regulatory subunits. The 20S proteasome core is composed of 28 subunits that are arranged in four stacked rings, resulting in a barrel-shaped structure. The two end rings are each formed by seven alpha subunits, and the two central rings are each formed by seven beta subunits. The catalytic chamber with the active sites is on the inside of the barrel.

Its subcellular location is the cytoplasm. The protein localises to the nucleus. In terms of biological role, the proteasome is a multicatalytic proteinase complex which is characterized by its ability to cleave peptides with Arg, Phe, Tyr, Leu, and Glu adjacent to the leaving group at neutral or slightly basic pH. The proteasome has an ATP-dependent proteolytic activity. This chain is Proteasome subunit alpha type-2, found in Trypanosoma brucei brucei.